The sequence spans 83 residues: Putative membrane protein insertion efficiency factor (83 aa).

The interval Lys62–Lys83 is disordered.

This sequence belongs to the UPF0161 family.

The protein resides in the cell inner membrane. Functionally, could be involved in insertion of integral membrane proteins into the membrane. The chain is Putative membrane protein insertion efficiency factor from Chlorobaculum tepidum (strain ATCC 49652 / DSM 12025 / NBRC 103806 / TLS) (Chlorobium tepidum).